A 1002-amino-acid chain; its full sequence is Calcium-transporting ATPase sarcoplasmic/endoplasmic reticulum type (1002 aa).

Residues 1-48 are Cytoplasmic-facing; sequence MEDGHSKTVEQSLNFFGTDGERGLTLDQIKTNQAKYGPNELPTEEGKS. The helical transmembrane segment at 49–69 threads the bilayer; that stretch reads IWQLVLEQFDDLLVKILLLAA. Residues 70-89 are Lumenal-facing; it reads IISFVLALFEEHEETFTAFV. A helical membrane pass occupies residues 90–110; that stretch reads EPLVILLILIANAVVGVWQER. At 111 to 253 the chain is on the cytoplasmic side; the sequence is NAESAIEALK…EIKTPLQQKL (143 aa). The helical transmembrane segment at 254–273 threads the bilayer; that stretch reads DEFGEQLSKVISVICVAVWA. The Lumenal portion of the chain corresponds to 274 to 295; sequence INIGHFNDPAHGGSWIKGAIYY. A helical membrane pass occupies residues 296–313; the sequence is FKIAVALAVAAIPEGLPA. The Ca(2+) site is built by V304, A305, I307, and E309. At 314 to 757 the chain is on the cytoplasmic side; it reads VITTCLALGT…EEGRAIYNNM (444 aa). D351 acts as the 4-aspartylphosphate intermediate in catalysis. Residues D703 and D707 each contribute to the Mg(2+) site. A helical transmembrane segment spans residues 758 to 777; it reads KQFIRYLISSNIGEVVSIFL. Ca(2+) contacts are provided by N768 and E771. The Lumenal segment spans residues 778–787; the sequence is TAALGLPEAL. The chain crosses the membrane as a helical span at residues 788 to 808; sequence IPVQLLWVNLVTDGLPATALG. Residues N796, T799, and D800 each coordinate Ca(2+). The Cytoplasmic portion of the chain corresponds to 809–828; it reads FNPPDLDIMDKPPRKADEGL. A helical transmembrane segment spans residues 829 to 851; that stretch reads ISGWLFFRYMAIGFYVGAATVGA. Residues 852 to 897 lie on the Lumenal side of the membrane; the sequence is AAWWFIASSEGPGLTYWQLTHHLSCLGGGDEFKGVDCKIFSDPKAM. Residues 898-917 form a helical membrane-spanning segment; it reads TMALSVLVTIEMLNAMNSLS. Residue E908 participates in Ca(2+) binding. Over 918 to 930 the chain is Cytoplasmic; sequence ENQSLISMPPWCN. The helical transmembrane segment at 931–949 threads the bilayer; the sequence is LWLIGSMALSFTLHFVILY. Over 950–964 the chain is Lumenal; the sequence is VDVLSTVFQVTPLSA. Residues 965–985 traverse the membrane as a helical segment; the sequence is EEWITVMKFSIPVVLLDETLK. Residues 986–1002 lie on the Cytoplasmic side of the membrane; sequence FVARKIADVPDAVVDKW.

The protein belongs to the cation transport ATPase (P-type) (TC 3.A.3) family.

The protein resides in the endoplasmic reticulum membrane. It localises to the sarcoplasmic reticulum membrane. It catalyses the reaction Ca(2+)(in) + ATP + H2O = Ca(2+)(out) + ADP + phosphate + H(+). Its function is as follows. This magnesium-dependent enzyme catalyzes the hydrolysis of ATP coupled with the transport of calcium. The protein is Calcium-transporting ATPase sarcoplasmic/endoplasmic reticulum type of Drosophila pseudoobscura pseudoobscura (Fruit fly).